Consider the following 238-residue polypeptide: B-box zinc finger protein 25 (238 aa).

Cys5, Cys8, Cys28, His33, Cys57, Cys60, Cys80, and His85 together coordinate Zn(2+). Residues 5–47 form a B box-type 1; atypical zinc finger; it reads CDVCEKAPATLICCADEAALCAKCDVEVHAANKLASKHQRLFL. Residues 57-99 form a B box-type 2; atypical zinc finger; the sequence is CDICLEKAAFIFCVEDRALLCRDCDEATHAPNTRSANHQRFLA. The disordered stretch occupies residues 115-139; that stretch reads VEKNHFDPSNQQSLSKPPTQQPAAP. Polar residues predominate over residues 121–137; that stretch reads DPSNQQSLSKPPTQQPA. Positions 226 to 238 are interaction with COP1; sequence DDEEEHFLVPDLG.

In terms of assembly, interacts with COP1 WD40 domain. Interacts with HY5 and HYH. COP1-mediated ubiquitination and subsequent proteasomal degradation of BBX25/STH occurs in the dark.

It is found in the nucleus. Functionally, acts as a negative regulator of seedling photomorphogenesis. BBX25/STH and BBX24/STO function as transcriptional corepressors of HY5 activity, leading to the down-regulation of BBX22 expression. BBX25/STH acts additively with BBX24/STO during de-etiolation and the hypocotyl shade avoidance response. This Arabidopsis thaliana (Mouse-ear cress) protein is B-box zinc finger protein 25.